The following is a 1005-amino-acid chain: Regulator of telomere elongation helicase 1 homolog (1005 aa).

In terms of domain architecture, Helicase ATP-binding spans 7-322; sequence AGIPVHFPFE…KEMLLELEKA (316 aa). Residue 42-49 coordinates ATP; that stretch reads SPTGTGKT. [4Fe-4S] cluster contacts are provided by C145, C163, C172, and C208. The short motif at 251–254 is the DEAH box element; that stretch reads DEAH. T876 is subject to Phosphothreonine. Positions 893–917 are disordered; it reads NGPLKTEPSEPATTSSSFCPTPAQS.

This sequence belongs to the helicase family. RAD3/XPD subfamily.

It localises to the nucleus. The catalysed reaction is ATP + H2O = ADP + phosphate + H(+). Its function is as follows. A probable ATP-dependent DNA helicase implicated in DNA repair and the maintenance of genomic stability. Acts as an anti-recombinase to counteract toxic recombination and limit crossover during meiosis. Regulates meiotic recombination and crossover homeostasis by physically dissociating strand invasion events and thereby promotes noncrossover repair by meiotic synthesis dependent strand annealing (SDSA) as well as disassembly of D loop recombination intermediates. This is Regulator of telomere elongation helicase 1 homolog from Drosophila virilis (Fruit fly).